The following is a 549-amino-acid chain: Protein EPD2 (549 aa).

Residues 1 to 20 (MISVIKSLLTLSVLSTLAAA) form the signal peptide. The N-linked (GlcNAc...) asparagine glycan is linked to asparagine 41. A disulfide bridge connects residues cysteine 82 and cysteine 111. 2 N-linked (GlcNAc...) asparagine glycosylation sites follow: asparagine 173 and asparagine 261. 5 disulfide bridges follow: cysteine 224/cysteine 358, cysteine 242/cysteine 273, cysteine 381/cysteine 432, cysteine 390/cysteine 456, and cysteine 409/cysteine 414. Asparagine 467 carries N-linked (GlcNAc...) asparagine glycosylation. The segment at 470-518 (ASTSCSAAGGRGLQSGRRSSTTRGGSSSSRSSSSSSSSSTGSGSSNAGI) is disordered. Over residues 484–514 (SGRRSSTTRGGSSSSRSSSSSSSSSTGSGSS) the composition is skewed to low complexity.

The protein belongs to the glycosyl hydrolase 72 family.

Its subcellular location is the cell membrane. This Candida maltosa (Yeast) protein is Protein EPD2 (EPD2).